The following is a 260-amino-acid chain: Putative protein phosphatase (260 aa).

The PPM-type phosphatase domain occupies 9 to 254 (FTGLSKKGPV…DNITAALVNL (246 aa)).

It catalyses the reaction O-phospho-L-seryl-[protein] + H2O = L-seryl-[protein] + phosphate. The catalysed reaction is O-phospho-L-threonyl-[protein] + H2O = L-threonyl-[protein] + phosphate. This Mycoplasma genitalium (strain ATCC 33530 / DSM 19775 / NCTC 10195 / G37) (Mycoplasmoides genitalium) protein is Putative protein phosphatase.